Reading from the N-terminus, the 405-residue chain is NADH-quinone oxidoreductase subunit D (405 aa).

This sequence belongs to the complex I 49 kDa subunit family. NDH-1 is composed of 14 different subunits. Subunits NuoB, C, D, E, F, and G constitute the peripheral sector of the complex.

It localises to the cell inner membrane. It carries out the reaction a quinone + NADH + 5 H(+)(in) = a quinol + NAD(+) + 4 H(+)(out). Its function is as follows. NDH-1 shuttles electrons from NADH, via FMN and iron-sulfur (Fe-S) centers, to quinones in the respiratory chain. The immediate electron acceptor for the enzyme in this species is believed to be ubiquinone. Couples the redox reaction to proton translocation (for every two electrons transferred, four hydrogen ions are translocated across the cytoplasmic membrane), and thus conserves the redox energy in a proton gradient. This is NADH-quinone oxidoreductase subunit D from Sphingopyxis alaskensis (strain DSM 13593 / LMG 18877 / RB2256) (Sphingomonas alaskensis).